The primary structure comprises 315 residues: Outer membrane protease OmpP (315 aa).

Residues 1–23 (MQTKLLAIMLAAPVVFSSQEASA) form the signal peptide. Residues Asp103, Asp105, Asp230, and His232 contribute to the active site.

This sequence belongs to the peptidase A26 family.

The protein resides in the cell outer membrane. In terms of biological role, protease; also acts as a receptor for bacteriophage Ox2. The sequence is that of Outer membrane protease OmpP (ompP) from Escherichia coli (strain K12).